We begin with the raw amino-acid sequence, 259 residues long: Probable ABC transporter permease protein RF_0080 (259 aa).

5 helical membrane passes run 13–35, 49–69, 148–168, 195–215, and 237–257; these read TIKF…SSII, LFIG…SGAV, VIAA…IGVM, PIDV…ISII, and AVVN…ELFF.

Belongs to the MlaE permease family.

The protein localises to the cell inner membrane. In terms of biological role, could be part of an ABC transporter complex. This is Probable ABC transporter permease protein RF_0080 from Rickettsia felis (strain ATCC VR-1525 / URRWXCal2) (Rickettsia azadi).